Reading from the N-terminus, the 113-residue chain is Fruiting body-specific class I hydrophobin fbh1 (113 aa).

Positions 1–23 (MFSIRIATVVLAASAALRPPARI) are cleaved as a signal peptide. Intrachain disulfides connect Cys-33-Cys-92, Cys-40-Cys-86, Cys-41-Cys-73, and Cys-93-Cys-106.

Belongs to the fungal hydrophobin family. As to quaternary structure, self-assembles to form functional amyloid fibrils called rodlets. Self-assembly into fibrillar rodlets occurs spontaneously at hydrophobic:hydrophilic interfaces and the rodlets further associate laterally to form amphipathic monolayers.

The protein localises to the secreted. It is found in the cell wall. In terms of biological role, aerial growth, conidiation, and dispersal of filamentous fungi in the environment rely upon a capability of their secreting small amphipathic proteins called hydrophobins (HPBs) with low sequence identity. Class I can self-assemble into an outermost layer of rodlet bundles on aerial cell surfaces, conferring cellular hydrophobicity that supports fungal growth, development and dispersal; whereas Class II form highly ordered films at water-air interfaces through intermolecular interactions but contribute nothing to the rodlet structure. Fbh1 is a fruiting body-specific class I hydrophobin that is involved in the growth rate and primordia formation. The polypeptide is Fruiting body-specific class I hydrophobin fbh1 (Pleurotus ostreatus (Oyster mushroom)).